Consider the following 375-residue polypeptide: Pulmonary surfactant-associated protein D (375 aa).

Residues Met1–Ala21 form the signal peptide. Cys35 and Cys40 each carry S-nitrosocysteine. Positions Val43–Leu221 are disordered. The Collagen-like domain occupies Gly46 to Pro222. The span at Arg50 to Asp65 shows a compositional bias: basic and acidic residues. Position 78 is a 4-hydroxyproline (Pro78). Residue Lys87 is modified to 5-hydroxylysine. Residue Asn90 is glycosylated (N-linked (GlcNAc...) asparagine). Pro96 carries the 4-hydroxyproline modification. At Lys99 the chain carries 5-hydroxylysine. The segment covering Ser105–Pro114 has biased composition (pro residues). Low complexity-rich tracts occupy residues Pro116–Gln132 and Lys138–Pro150. 4-hydroxyproline is present on residues Pro171 and Pro177. Low complexity predominate over residues Glu173–Met189. Residues Lys204–Lys216 are compositionally biased toward basic and acidic residues. Residues Asp223 to Val251 are a coiled coil. The C-type lectin domain maps to Val260–Glu374. 2 cysteine pairs are disulfide-bonded: Cys281–Cys373 and Cys351–Cys365.

It belongs to the SFTPD family. As to quaternary structure, oligomeric complex of 4 set of homotrimers. In terms of processing, hydroxylation on proline residues within the sequence motif, GXPG, is most likely to be 4-hydroxy as this fits the requirement for 4-hydroxylation in vertebrates. Post-translationally, S-nitrosylation at Cys-35 and Cys-40 alters the quaternary structure which results in a pro-inflammatory chemoattractive signaling activity with macrophages.

It is found in the secreted. It localises to the extracellular space. The protein resides in the extracellular matrix. Its subcellular location is the surface film. Contributes to the lung's defense against inhaled microorganisms, organic antigens and toxins. Interacts with compounds such as bacterial lipopolysaccharides, oligosaccharides and fatty acids and modulates leukocyte action in immune response. May participate in the extracellular reorganization or turnover of pulmonary surfactant. Binds strongly maltose residues and to a lesser extent other alpha-glucosyl moieties. This chain is Pulmonary surfactant-associated protein D (SFTPD), found in Macaca mulatta (Rhesus macaque).